We begin with the raw amino-acid sequence, 376 residues long: Ribonucleoside-diphosphate reductase subunit beta (376 aa).

Positions 85, 116, and 119 each coordinate Fe cation. Residue tyrosine 123 is part of the active site. Residues glutamate 205, glutamate 239, and histidine 242 each coordinate Fe cation.

It belongs to the ribonucleoside diphosphate reductase small chain family. As to quaternary structure, tetramer of two alpha and two beta subunits. The cofactor is Fe cation.

The catalysed reaction is a 2'-deoxyribonucleoside 5'-diphosphate + [thioredoxin]-disulfide + H2O = a ribonucleoside 5'-diphosphate + [thioredoxin]-dithiol. Provides the precursors necessary for DNA synthesis. Catalyzes the biosynthesis of deoxyribonucleotides from the corresponding ribonucleotides. This is Ribonucleoside-diphosphate reductase subunit beta (nrdB) from Buchnera aphidicola subsp. Baizongia pistaciae (strain Bp).